A 454-amino-acid chain; its full sequence is UDP-N-acetylmuramoylalanine--D-glutamate ligase (454 aa).

115 to 121 is an ATP binding site; that stretch reads GTNGKTT.

This sequence belongs to the MurCDEF family.

It localises to the cytoplasm. It carries out the reaction UDP-N-acetyl-alpha-D-muramoyl-L-alanine + D-glutamate + ATP = UDP-N-acetyl-alpha-D-muramoyl-L-alanyl-D-glutamate + ADP + phosphate + H(+). It participates in cell wall biogenesis; peptidoglycan biosynthesis. Its function is as follows. Cell wall formation. Catalyzes the addition of glutamate to the nucleotide precursor UDP-N-acetylmuramoyl-L-alanine (UMA). The sequence is that of UDP-N-acetylmuramoylalanine--D-glutamate ligase from Thermoanaerobacter sp. (strain X514).